We begin with the raw amino-acid sequence, 360 residues long: Peptide chain release factor 1 (360 aa).

N5-methylglutamine is present on glutamine 235. A disordered region spans residues 285-313 (KRQQAEASTRRNLLGSGDRSDRNRTYNFP).

This sequence belongs to the prokaryotic/mitochondrial release factor family. Methylated by PrmC. Methylation increases the termination efficiency of RF1.

It localises to the cytoplasm. Peptide chain release factor 1 directs the termination of translation in response to the peptide chain termination codons UAG and UAA. The polypeptide is Peptide chain release factor 1 (Enterobacter sp. (strain 638)).